Reading from the N-terminus, the 491-residue chain is Leucine aminopeptidase 1 (491 aa).

Positions 252 and 257 each coordinate Zn(2+). The active site involves Lys-264. Zn(2+) contacts are provided by Asp-275, Asp-334, and Glu-336. Residue Arg-338 is part of the active site.

It belongs to the peptidase M17 family. Requires Zn(2+) as cofactor. As to expression, expressed in the buccal cavity, pharynx, anterior gut and rectum.

The catalysed reaction is Release of an N-terminal amino acid, Xaa-|-Yaa-, in which Xaa is preferably Leu, but may be other amino acids including Pro although not Arg or Lys, and Yaa may be Pro. Amino acid amides and methyl esters are also readily hydrolyzed, but rates on arylamides are exceedingly low.. Its function is as follows. Probably acts as a digestive enzyme. This Caenorhabditis elegans protein is Leucine aminopeptidase 1 (lap-1).